Here is a 230-residue protein sequence, read N- to C-terminus: Pyridoxine/pyridoxamine 5'-phosphate oxidase (230 aa).

Substrate contacts are provided by residues Arg21–Tyr24 and Lys87. Residues Arg82–Lys87, Tyr97–Thr98, Lys104, and Gln126 each bind FMN. Positions 144, 148, and 152 each coordinate substrate. Residues Gln161 to Ser162 and Trp207 each bind FMN. Arg213–His215 contributes to the substrate binding site. Arg217 lines the FMN pocket.

Belongs to the pyridoxamine 5'-phosphate oxidase family. In terms of assembly, homodimer. FMN is required as a cofactor.

It catalyses the reaction pyridoxamine 5'-phosphate + O2 + H2O = pyridoxal 5'-phosphate + H2O2 + NH4(+). It carries out the reaction pyridoxine 5'-phosphate + O2 = pyridoxal 5'-phosphate + H2O2. It participates in cofactor metabolism; pyridoxal 5'-phosphate salvage; pyridoxal 5'-phosphate from pyridoxamine 5'-phosphate: step 1/1. The protein operates within cofactor metabolism; pyridoxal 5'-phosphate salvage; pyridoxal 5'-phosphate from pyridoxine 5'-phosphate: step 1/1. Catalyzes the oxidation of either pyridoxine 5'-phosphate (PNP) or pyridoxamine 5'-phosphate (PMP) into pyridoxal 5'-phosphate (PLP). The polypeptide is Pyridoxine/pyridoxamine 5'-phosphate oxidase (Mycolicibacterium smegmatis (strain ATCC 700084 / mc(2)155) (Mycobacterium smegmatis)).